We begin with the raw amino-acid sequence, 306 residues long: UPF0282 protein Pars_1056 (306 aa).

This sequence belongs to the UPF0282 family.

The protein is UPF0282 protein Pars_1056 of Pyrobaculum arsenaticum (strain DSM 13514 / JCM 11321 / PZ6).